Consider the following 162-residue polypeptide: NADH-ubiquinone oxidoreductase 24 kDa subunit homolog C11E3.12, mitochondrial (162 aa).

[2Fe-2S] cluster is bound by residues C88, C93, C125, and C129.

It belongs to the complex I 24 kDa subunit family. [2Fe-2S] cluster is required as a cofactor.

Its subcellular location is the mitochondrion. This chain is NADH-ubiquinone oxidoreductase 24 kDa subunit homolog C11E3.12, mitochondrial, found in Schizosaccharomyces pombe (strain 972 / ATCC 24843) (Fission yeast).